A 341-amino-acid polypeptide reads, in one-letter code: NADH-quinone oxidoreductase subunit H 1 (341 aa).

Helical transmembrane passes span 7–27 (IILT…ISLL), 46–66 (PNVV…KYIF), 80–100 (FFLA…VIPF), 111–131 (VAIL…IMGG), 157–177 (LGLI…SHIV), 183–203 (AFGL…LFFI), 244–264 (YIAI…GWLS), 273–293 (VFWM…VKAI), and 305–325 (IGWK…AFLA).

It belongs to the complex I subunit 1 family. In terms of assembly, NDH-1 is composed of 14 different subunits. Subunits NuoA, H, J, K, L, M, N constitute the membrane sector of the complex.

Its subcellular location is the cell inner membrane. The catalysed reaction is a quinone + NADH + 5 H(+)(in) = a quinol + NAD(+) + 4 H(+)(out). NDH-1 shuttles electrons from NADH, via FMN and iron-sulfur (Fe-S) centers, to quinones in the respiratory chain. The immediate electron acceptor for the enzyme in this species is believed to be ubiquinone. Couples the redox reaction to proton translocation (for every two electrons transferred, four hydrogen ions are translocated across the cytoplasmic membrane), and thus conserves the redox energy in a proton gradient. This subunit may bind ubiquinone. The sequence is that of NADH-quinone oxidoreductase subunit H 1 from Cereibacter sphaeroides (strain ATCC 17029 / ATH 2.4.9) (Rhodobacter sphaeroides).